Reading from the N-terminus, the 62-residue chain is Large ribosomal subunit protein uL30 (62 aa).

It belongs to the universal ribosomal protein uL30 family. In terms of assembly, part of the 50S ribosomal subunit.

The protein is Large ribosomal subunit protein uL30 of Heliobacterium modesticaldum (strain ATCC 51547 / Ice1).